The sequence spans 485 residues: MSIRYESVEKLSEMIKNKEIKPSEVVKDIYDAIEETDPTIKSFLALDKENAMKKAEELDELQAKDQMEGKLFGIPMGIKDNIITEGLETTCASKMLEGFVPIYESTVMNKLHDENAVLIGKLNMDEFAMGGSTETSYYKKTVNPFDHTAVPGGSSGGSAAAVAAGLVPFSLGSDTGGSIRQPAAYCGIVGMKPTYGRVSRFGLVAFASSLDQIGPLTRNVKDNAIVLETIVGEDKHDSTSAPVADNDFTSDIGKDIRGMKIALPKEYLGEGVNDEVKEAVRNAVEILEGEGAIVEEVSLPNTGYGIPSYYVIASSEASSNLSRFDGIRYGFHSKEANTLDELYKLSRSEGFGKEVKRRILLGTFALSSGYYDAYYKKSQKVRTLIRQDFERVFEDYDVVVGPTTPTPAFNLGEEINDPLTMYANDLLTTPVNLAGLPGISIPCGQTNDRPIGLQFIGKPFDEKTLYRVAYQFEQQYNLHDQYQNL.

Residues Lys79 and Ser154 each act as charge relay system in the active site. The active-site Acyl-ester intermediate is the Ser178.

The protein belongs to the amidase family. GatA subfamily. Heterotrimer of A, B and C subunits.

The enzyme catalyses L-glutamyl-tRNA(Gln) + L-glutamine + ATP + H2O = L-glutaminyl-tRNA(Gln) + L-glutamate + ADP + phosphate + H(+). Functionally, allows the formation of correctly charged Gln-tRNA(Gln) through the transamidation of misacylated Glu-tRNA(Gln) in organisms which lack glutaminyl-tRNA synthetase. The reaction takes place in the presence of glutamine and ATP through an activated gamma-phospho-Glu-tRNA(Gln). This is Glutamyl-tRNA(Gln) amidotransferase subunit A from Staphylococcus carnosus (strain TM300).